We begin with the raw amino-acid sequence, 347 residues long: Probable E3 ubiquitin-protein ligase DTX3 (347 aa).

The tract at residues 113 to 157 (EHPEMHRAGPPPLRAAPLLPPGARGLPPPPPPLPPPLPPRLREEA) is disordered. Over residues 121-151 (GPPPLRAAPLLPPGARGLPPPPPPLPPPLPP) the composition is skewed to pro residues. The RING-type zinc finger occupies 164 to 205 (CPICLGEIQNAKTLEKCRHSFCEGCITRALQVKKACPMCGRF).

Belongs to the Deltex family. In terms of assembly, homodimer. May form a heterodimers with other members of the Deltex family. Interacts with NOTCH1.

It is found in the cytoplasm. It catalyses the reaction S-ubiquitinyl-[E2 ubiquitin-conjugating enzyme]-L-cysteine + [acceptor protein]-L-lysine = [E2 ubiquitin-conjugating enzyme]-L-cysteine + N(6)-ubiquitinyl-[acceptor protein]-L-lysine.. It functions in the pathway protein modification; protein ubiquitination. Regulator of Notch signaling, a signaling pathway involved in cell-cell communications that regulates a broad spectrum of cell-fate determinations. Probably acts both as a positive and negative regulator of Notch, depending on the developmental and cell context. Functions as an ubiquitin ligase protein in vitro, suggesting that it may regulate the Notch pathway via some ubiquitin ligase activity. In Homo sapiens (Human), this protein is Probable E3 ubiquitin-protein ligase DTX3 (DTX3).